The following is a 146-amino-acid chain: Hemoglobin subunit beta (146 aa).

Position 1 is an N-acetylvaline (Val-1). A Globin domain is found at 2 to 146 (HLSGEEKACV…VANALAHKYH (145 aa)). Position 12 is a phosphothreonine (Thr-12). A Phosphoserine modification is found at Ser-44. The residue at position 59 (Lys-59) is an N6-acetyllysine. Residue His-63 participates in heme b binding. The residue at position 82 (Lys-82) is an N6-acetyllysine. His-92 serves as a coordination point for heme b. Residue Cys-93 is modified to S-nitrosocysteine. Lys-144 is subject to N6-acetyllysine.

It belongs to the globin family. As to quaternary structure, heterotetramer of two alpha chains and two beta chains. In terms of tissue distribution, red blood cells.

Its function is as follows. Involved in oxygen transport from the lung to the various peripheral tissues. This chain is Hemoglobin subunit beta (HBB), found in Suncus murinus (Asian house shrew).